Consider the following 185-residue polypeptide: Ribosome-recycling factor (185 aa).

It belongs to the RRF family.

Its subcellular location is the cytoplasm. Functionally, responsible for the release of ribosomes from messenger RNA at the termination of protein biosynthesis. May increase the efficiency of translation by recycling ribosomes from one round of translation to another. The protein is Ribosome-recycling factor of Alkaliphilus oremlandii (strain OhILAs) (Clostridium oremlandii (strain OhILAs)).